A 542-amino-acid polypeptide reads, in one-letter code: CTP synthase (542 aa).

Residues 1–265 (MTRYIFVTGG…DEIIVERFGL (265 aa)) form an amidoligase domain region. S13 provides a ligand contact to CTP. A UTP-binding site is contributed by S13. ATP contacts are provided by residues 14–19 (SLGKGI) and D71. Residues D71 and E139 each contribute to the Mg(2+) site. CTP is bound by residues 146–148 (DIE), 186–191 (KTKPTQ), and K222. UTP is bound by residues 186–191 (KTKPTQ) and K222. Residues 290 to 541 (TIAMVGKYME…VRAALENAGG (252 aa)) enclose the Glutamine amidotransferase type-1 domain. G351 lines the L-glutamine pocket. The active-site Nucleophile; for glutamine hydrolysis is the C378. Residues 379 to 382 (LGLQ), E402, and R469 contribute to the L-glutamine site. Residues H514 and E516 contribute to the active site.

The protein belongs to the CTP synthase family. As to quaternary structure, homotetramer.

It carries out the reaction UTP + L-glutamine + ATP + H2O = CTP + L-glutamate + ADP + phosphate + 2 H(+). The enzyme catalyses L-glutamine + H2O = L-glutamate + NH4(+). It catalyses the reaction UTP + NH4(+) + ATP = CTP + ADP + phosphate + 2 H(+). It participates in pyrimidine metabolism; CTP biosynthesis via de novo pathway; CTP from UDP: step 2/2. Its activity is regulated as follows. Allosterically activated by GTP, when glutamine is the substrate; GTP has no effect on the reaction when ammonia is the substrate. The allosteric effector GTP functions by stabilizing the protein conformation that binds the tetrahedral intermediate(s) formed during glutamine hydrolysis. Inhibited by the product CTP, via allosteric rather than competitive inhibition. Its function is as follows. Catalyzes the ATP-dependent amination of UTP to CTP with either L-glutamine or ammonia as the source of nitrogen. Regulates intracellular CTP levels through interactions with the four ribonucleotide triphosphates. This Hahella chejuensis (strain KCTC 2396) protein is CTP synthase.